A 108-amino-acid polypeptide reads, in one-letter code: uncharacterized protein (108 aa).

The first 22 residues, 1–22, serve as a signal peptide directing secretion; that stretch reads MMIKQCVICLSLLVFGTTAAHA.

This is an uncharacterized protein from Bacillus subtilis (strain 168).